A 361-amino-acid chain; its full sequence is Peptide chain release factor 1 (361 aa).

Q235 carries the post-translational modification N5-methylglutamine.

The protein belongs to the prokaryotic/mitochondrial release factor family. Post-translationally, methylated by PrmC. Methylation increases the termination efficiency of RF1.

It is found in the cytoplasm. Its function is as follows. Peptide chain release factor 1 directs the termination of translation in response to the peptide chain termination codons UAG and UAA. This Chlamydia abortus (strain DSM 27085 / S26/3) (Chlamydophila abortus) protein is Peptide chain release factor 1.